Reading from the N-terminus, the 373-residue chain is 4-hydroxy-3-methylbut-2-en-1-yl diphosphate synthase (flavodoxin) (373 aa).

4 residues coordinate [4Fe-4S] cluster: Cys268, Cys271, Cys303, and Glu310.

The protein belongs to the IspG family. [4Fe-4S] cluster serves as cofactor.

The enzyme catalyses (2E)-4-hydroxy-3-methylbut-2-enyl diphosphate + oxidized [flavodoxin] + H2O + 2 H(+) = 2-C-methyl-D-erythritol 2,4-cyclic diphosphate + reduced [flavodoxin]. Its pathway is isoprenoid biosynthesis; isopentenyl diphosphate biosynthesis via DXP pathway; isopentenyl diphosphate from 1-deoxy-D-xylulose 5-phosphate: step 5/6. In terms of biological role, converts 2C-methyl-D-erythritol 2,4-cyclodiphosphate (ME-2,4cPP) into 1-hydroxy-2-methyl-2-(E)-butenyl 4-diphosphate. This chain is 4-hydroxy-3-methylbut-2-en-1-yl diphosphate synthase (flavodoxin), found in Exiguobacterium sp. (strain ATCC BAA-1283 / AT1b).